Here is a 342-residue protein sequence, read N- to C-terminus: Fructose-1,6-bisphosphatase class 1 (342 aa).

Positions 91, 113, 115, and 116 each coordinate Mg(2+). Substrate-binding positions include 116–119 (DGSS), N211, and K277. Residue E283 participates in Mg(2+) binding.

This sequence belongs to the FBPase class 1 family. As to quaternary structure, homotetramer. It depends on Mg(2+) as a cofactor.

Its subcellular location is the cytoplasm. It carries out the reaction beta-D-fructose 1,6-bisphosphate + H2O = beta-D-fructose 6-phosphate + phosphate. The protein operates within carbohydrate biosynthesis; gluconeogenesis. In Bordetella petrii (strain ATCC BAA-461 / DSM 12804 / CCUG 43448), this protein is Fructose-1,6-bisphosphatase class 1.